The sequence spans 351 residues: Protein pelota homolog (351 aa).

Belongs to the eukaryotic release factor 1 family. Pelota subfamily. As to quaternary structure, monomer. The cofactor is a divalent metal cation.

The protein localises to the cytoplasm. Functionally, may function in recognizing stalled ribosomes, interact with stem-loop structures in stalled mRNA molecules, and effect endonucleolytic cleavage of the mRNA. May play a role in the release non-functional ribosomes and degradation of damaged mRNAs. Has endoribonuclease activity. The sequence is that of Protein pelota homolog from Methanosphaera stadtmanae (strain ATCC 43021 / DSM 3091 / JCM 11832 / MCB-3).